Consider the following 206-residue polypeptide: MGHRDVATVGLGGPVGSGKTAMVKRLVPRLDAAGYNVGVIANDIMTQEDADRLRESFEGILPPDLVEGVETGACPHTGIREDPSMNIAAIDEFTESYPDLDVVLLESGGDNLAATFNPELADYFIFVISVAEGDDIPRKRGPGVTQADLLVVNKTDLAPHVDADLEVMRRDAETVRGDAPTCFTDCKAEEGIDGVVDHIEEGVLFA.

Residue 13-20 (GPVGSGKT) participates in GTP binding.

This sequence belongs to the SIMIBI class G3E GTPase family. UreG subfamily. As to quaternary structure, homodimer. UreD, UreF and UreG form a complex that acts as a GTP-hydrolysis-dependent molecular chaperone, activating the urease apoprotein by helping to assemble the nickel containing metallocenter of UreC. The UreE protein probably delivers the nickel.

The protein localises to the cytoplasm. Its function is as follows. Facilitates the functional incorporation of the urease nickel metallocenter. This process requires GTP hydrolysis, probably effectuated by UreG. The protein is Urease accessory protein UreG of Natronomonas pharaonis (strain ATCC 35678 / DSM 2160 / CIP 103997 / JCM 8858 / NBRC 14720 / NCIMB 2260 / Gabara) (Halobacterium pharaonis).